Reading from the N-terminus, the 291-residue chain is MFEGILPAIITPFYRDSRASLDIEGLQSNIESLLQRGVHGIVPCGSTGESATLTFEEHEQVIGKAVEVVDGRVPVLAGTGSNNTEEAVRLTRSAKDAGADGALIISPYYNKPNRSGLIKHFTKLADLDIPIVLYNVPGRTGQNLQPDLVAELARHPNIVGIKEASGDITQISRIIEETRDEEFSVISGDDAMTLPVLAVGGAGVISVAANVDPGRMVGMYEAFRAGDLARAQVLHYELAPLMRAMFIDTNPIPVKKAVELLGMAAGPVRLPLDELDEAKTEQLRKVLVNHG.

Threonine 47 contributes to the pyruvate binding site. The active-site Proton donor/acceptor is the tyrosine 134. Lysine 162 serves as the catalytic Schiff-base intermediate with substrate. Isoleucine 205 serves as a coordination point for pyruvate.

This sequence belongs to the DapA family. In terms of assembly, homotetramer; dimer of dimers.

Its subcellular location is the cytoplasm. The enzyme catalyses L-aspartate 4-semialdehyde + pyruvate = (2S,4S)-4-hydroxy-2,3,4,5-tetrahydrodipicolinate + H2O + H(+). It participates in amino-acid biosynthesis; L-lysine biosynthesis via DAP pathway; (S)-tetrahydrodipicolinate from L-aspartate: step 3/4. Functionally, catalyzes the condensation of (S)-aspartate-beta-semialdehyde [(S)-ASA] and pyruvate to 4-hydroxy-tetrahydrodipicolinate (HTPA). This chain is 4-hydroxy-tetrahydrodipicolinate synthase, found in Methanoculleus marisnigri (strain ATCC 35101 / DSM 1498 / JR1).